A 472-amino-acid polypeptide reads, in one-letter code: Phenylalanine--tRNA ligase, mitochondrial (472 aa).

Substrate-binding positions include 157-160 (SAHQ), Arg179, 186-188 (QHY), and 193-195 (QLE). Position 202 is an N6-acetyllysine (Lys202). Residues Glu287 and Phe312 each coordinate substrate. Residues 379–471 (SKYPAVFNDI…AVQLLGVEGR (93 aa)) enclose the FDX-ACB domain.

The protein belongs to the class-II aminoacyl-tRNA synthetase family. In terms of assembly, monomer. Mainly expressed in the Purkinje cell of cerebellum.

It is found in the mitochondrion matrix. Its subcellular location is the mitochondrion. It carries out the reaction tRNA(Phe) + L-phenylalanine + ATP = L-phenylalanyl-tRNA(Phe) + AMP + diphosphate + H(+). In terms of biological role, is responsible for the charging of tRNA(Phe) with phenylalanine in mitochondrial translation. To a lesser extent, also catalyzes direct attachment of m-Tyr (an oxidized version of Phe) to tRNA(Phe), thereby opening the way for delivery of the misacylated tRNA to the ribosome and incorporation of ROS-damaged amino acid into proteins. In Rattus norvegicus (Rat), this protein is Phenylalanine--tRNA ligase, mitochondrial (Fars2).